The chain runs to 401 residues: L-rhamnonate dehydratase (401 aa).

Substrate is bound by residues His29 and Arg55. The Mg(2+) site is built by Asp222, Glu248, and Glu276. His325 acts as the Proton acceptor in catalysis. Residue Glu345 coordinates substrate.

This sequence belongs to the mandelate racemase/muconate lactonizing enzyme family. RhamD subfamily. In terms of assembly, homooctamer; tetramer of dimers. Mg(2+) is required as a cofactor.

It catalyses the reaction L-rhamnonate = 2-dehydro-3-deoxy-L-rhamnonate + H2O. Its function is as follows. Catalyzes the dehydration of L-rhamnonate to 2-keto-3-deoxy-L-rhamnonate (KDR). The polypeptide is L-rhamnonate dehydratase (Salmonella schwarzengrund (strain CVM19633)).